The primary structure comprises 806 residues: Leucine--tRNA ligase (806 aa).

Positions P40–H51 match the 'HIGH' region motif. The short motif at K576–S580 is the 'KMSKS' region element. ATP is bound at residue K579.

The protein belongs to the class-I aminoacyl-tRNA synthetase family.

It localises to the cytoplasm. The catalysed reaction is tRNA(Leu) + L-leucine + ATP = L-leucyl-tRNA(Leu) + AMP + diphosphate. The sequence is that of Leucine--tRNA ligase from Halalkalibacterium halodurans (strain ATCC BAA-125 / DSM 18197 / FERM 7344 / JCM 9153 / C-125) (Bacillus halodurans).